Consider the following 63-residue polypeptide: DNA-directed RNA polymerase 7 kDa subunit (63 aa).

The protein belongs to the poxviridae DNA-directed RNA polymerase 7 kDa subunit family. In terms of assembly, the DNA-dependent RNA polymerase used for intermediate and late genes expression consists of eight subunits 147 kDa, 133 kDa, 35 kDa, 30 kDa, 22 kDa, 19 kDa, 18 kDa and 7 kDa totalling more than 500 kDa in mass. The same holoenzyme, with the addition of the transcription-specificity factor RAP94, is used for early gene expression.

Its subcellular location is the virion. It carries out the reaction RNA(n) + a ribonucleoside 5'-triphosphate = RNA(n+1) + diphosphate. Part of the DNA-dependent RNA polymerase which catalyzes the transcription of viral DNA into RNA using the four ribonucleoside triphosphates as substrates. Responsible for the transcription of early, intermediate and late genes. DNA-dependent RNA polymerase associates with the early transcription factor (ETF) thereby allowing the early genes transcription. Late transcription, and probably also intermediate transcription, require newly synthesized RNA polymerase. In Myxoma virus (strain Lausanne) (MYXV), this protein is DNA-directed RNA polymerase 7 kDa subunit (RPO7).